The primary structure comprises 243 residues: Peptidyl-tRNA hydrolase (243 aa).

Y14 is a tRNA binding site. Residue H19 is the Proton acceptor of the active site. Positions 64, 66, and 112 each coordinate tRNA. Basic and acidic residues predominate over residues 190-205 (KAEEEKPAKEMKDAGK). Residues 190 to 243 (KAEEEKPAKEMKDAGKKPASQSHIHQARNHNQPKLPATGPMADMLKKMFGKKGD) are disordered. Over residues 208–221 (ASQSHIHQARNHNQ) the composition is skewed to polar residues.

This sequence belongs to the PTH family. In terms of assembly, monomer.

It is found in the cytoplasm. It catalyses the reaction an N-acyl-L-alpha-aminoacyl-tRNA + H2O = an N-acyl-L-amino acid + a tRNA + H(+). Hydrolyzes ribosome-free peptidyl-tRNAs (with 1 or more amino acids incorporated), which drop off the ribosome during protein synthesis, or as a result of ribosome stalling. Functionally, catalyzes the release of premature peptidyl moieties from peptidyl-tRNA molecules trapped in stalled 50S ribosomal subunits, and thus maintains levels of free tRNAs and 50S ribosomes. The protein is Peptidyl-tRNA hydrolase of Rhizobium johnstonii (strain DSM 114642 / LMG 32736 / 3841) (Rhizobium leguminosarum bv. viciae).